The sequence spans 429 residues: Glutamate-1-semialdehyde 2,1-aminomutase 1 (429 aa).

At Lys267 the chain carries N6-(pyridoxal phosphate)lysine.

This sequence belongs to the class-III pyridoxal-phosphate-dependent aminotransferase family. HemL subfamily. Homodimer. Pyridoxal 5'-phosphate serves as cofactor.

It is found in the cytoplasm. The catalysed reaction is (S)-4-amino-5-oxopentanoate = 5-aminolevulinate. It functions in the pathway porphyrin-containing compound metabolism; protoporphyrin-IX biosynthesis; 5-aminolevulinate from L-glutamyl-tRNA(Glu): step 2/2. The polypeptide is Glutamate-1-semialdehyde 2,1-aminomutase 1 (Bacillus velezensis (strain DSM 23117 / BGSC 10A6 / LMG 26770 / FZB42) (Bacillus amyloliquefaciens subsp. plantarum)).